A 152-amino-acid polypeptide reads, in one-letter code: Adenosine 5'-monophosphoramidase HNT1 (152 aa).

The HIT domain maps to 8 to 119 (IFCKIIKGEI…IPKKDEATGL (112 aa)). Residues 33-34 (DI), N93, 99-101 (HQV), and 106-108 (HFH) contribute to the AMP site. The Histidine triad motif motif lies at 104-108 (HVHFH). H106 functions as the Tele-AMP-histidine intermediate in the catalytic mechanism.

This sequence belongs to the HINT family. In terms of assembly, homodimer. Mg(2+) serves as cofactor.

The catalysed reaction is adenosine 5'-phosphoramidate + H2O = AMP + NH4(+). Hydrolyzes adenosine 5'-monophosphoramidate substrates such as AMP-morpholidate, AMP-N-alanine methyl ester, AMP-alpha-acetyl lysine methyl ester and AMP-NH2. This chain is Adenosine 5'-monophosphoramidase HNT1, found in Candida albicans (strain SC5314 / ATCC MYA-2876) (Yeast).